The following is a 475-amino-acid chain: Glycogen synthase (475 aa).

Residue Lys15 participates in ADP-alpha-D-glucose binding.

Belongs to the glycosyltransferase 1 family. Bacterial/plant glycogen synthase subfamily.

The enzyme catalyses [(1-&gt;4)-alpha-D-glucosyl](n) + ADP-alpha-D-glucose = [(1-&gt;4)-alpha-D-glucosyl](n+1) + ADP + H(+). The protein operates within glycan biosynthesis; glycogen biosynthesis. Its function is as follows. Synthesizes alpha-1,4-glucan chains using ADP-glucose. The chain is Glycogen synthase from Alkaliphilus metalliredigens (strain QYMF).